A 68-amino-acid chain; its full sequence is Purkinje cell protein 4-like protein 1 (68 aa).

Residues 1–16 (MSELNTKTPPAANQAS) show a composition bias toward polar residues. Residues 1–42 (MSELNTKTPPAANQASDPEEKGKPGSIKKAEEEEEIDIDLTA) form a disordered region. Position 8 is a phosphothreonine (Thr8). Basic and acidic residues predominate over residues 18-31 (PEEKGKPGSIKKAE). Residues 45–68 (TEKAALAIQGKFRRFQKRKKDSSS) enclose the IQ domain.

It belongs to the PCP4 family. Expressed in laminar and nuclear structures of the CNS.

The sequence is that of Purkinje cell protein 4-like protein 1 (Pcp4l1) from Mus musculus (Mouse).